A 1094-amino-acid polypeptide reads, in one-letter code: Formin-like protein 1 (1094 aa).

Disordered regions lie at residues 1-29, 173-199, and 507-627; these read MGNA…KQPM, SGAE…VPKS, and AATP…GVKA. Residue glycine 2 is the site of N-myristoyl glycine attachment. At serine 7 the chain carries Phosphoserine. Residues 16–28 show a composition bias toward pro residues; the sequence is ASPPKQPAVPKQP. The region spanning 27-464 is the GBD/FH3 domain; the sequence is QPMPAAGELE…SRRIPEPEKV (438 aa). Residue serine 184 is modified to Phosphoserine. Over residues 519-529 the composition is skewed to polar residues; sequence RVSTDSPSTAE. Composition is skewed to pro residues over residues 535-549 and 559-610; these read ASPP…PPLP and PSAP…PGGP. The FH2 domain maps to 627 to 1018; it reads AKKPIQTKFR…DTSGREEPPT (392 aa). Position 688 is a phosphoserine (serine 688). The span at 1002-1017 shows a compositional bias: basic and acidic residues; it reads WKKEAAADTSGREEPP. The interval 1002-1094 is disordered; the sequence is WKKEAAADTS…PLPVTTDLAL (93 aa). Phosphoserine is present on serine 1021. The 34-residue stretch at 1049–1082 folds into the DAD domain; that stretch reads SDRDGAIEDIITDLRNQPYIRADTGRRSARRRPP.

Belongs to the formin homology family. As to quaternary structure, interacts with RAC1, PFN1 and PFN2. Interacts (activated by RAC1) with SRGAP2 (via SH3 domain); regulates the actin filament severing activity of FMNL1. In terms of processing, myristoylation mediates membrane localization. Highly expressed in the spleen, lymph node and bone marrow cells.

It is found in the cytoplasm. It localises to the cell membrane. Its subcellular location is the cytoplasmic vesicle. The protein localises to the phagosome. In terms of biological role, plays a role in the regulation of cell morphology and cytoskeletal organization. Required in the cortical actin filament dynamics and cell shape. May play a role in the control of cell motility and survival of macrophages. The sequence is that of Formin-like protein 1 (Fmnl1) from Mus musculus (Mouse).